The chain runs to 385 residues: Protein-glutamate methylesterase/protein-glutamine glutaminase (385 aa).

In terms of domain architecture, Response regulatory spans 20-138 (RVMIVDDSVV…EASAADIFKH (119 aa)). Position 71 is a 4-aspartylphosphate (aspartate 71). The CheB-type methylesterase domain occupies 189–383 (GVTAPRVLLI…PKLVRLFSGD (195 aa)). Catalysis depends on residues serine 201, histidine 229, and aspartate 325.

Belongs to the CheB family. Phosphorylated by CheA. Phosphorylation of the N-terminal regulatory domain activates the methylesterase activity.

It localises to the cytoplasm. The enzyme catalyses [protein]-L-glutamate 5-O-methyl ester + H2O = L-glutamyl-[protein] + methanol + H(+). It catalyses the reaction L-glutaminyl-[protein] + H2O = L-glutamyl-[protein] + NH4(+). Functionally, involved in chemotaxis. Part of a chemotaxis signal transduction system that modulates chemotaxis in response to various stimuli. Catalyzes the demethylation of specific methylglutamate residues introduced into the chemoreceptors (methyl-accepting chemotaxis proteins or MCP) by CheR. Also mediates the irreversible deamidation of specific glutamine residues to glutamic acid. This Rhodopseudomonas palustris (strain BisB5) protein is Protein-glutamate methylesterase/protein-glutamine glutaminase.